A 430-amino-acid polypeptide reads, in one-letter code: Enolase (430 aa).

(2R)-2-phosphoglycerate is bound at residue Gln164. Residue Glu208 is the Proton donor of the active site. The Mg(2+) site is built by Asp245, Glu288, and Asp315. Residues Lys340, Arg369, Ser370, and Lys391 each contribute to the (2R)-2-phosphoglycerate site. The active-site Proton acceptor is Lys340.

This sequence belongs to the enolase family. It depends on Mg(2+) as a cofactor.

The protein localises to the cytoplasm. Its subcellular location is the secreted. It localises to the cell surface. The enzyme catalyses (2R)-2-phosphoglycerate = phosphoenolpyruvate + H2O. It functions in the pathway carbohydrate degradation; glycolysis; pyruvate from D-glyceraldehyde 3-phosphate: step 4/5. Its function is as follows. Catalyzes the reversible conversion of 2-phosphoglycerate (2-PG) into phosphoenolpyruvate (PEP). It is essential for the degradation of carbohydrates via glycolysis. This Thermococcus kodakarensis (strain ATCC BAA-918 / JCM 12380 / KOD1) (Pyrococcus kodakaraensis (strain KOD1)) protein is Enolase.